The primary structure comprises 348 residues: Rhodopsin (348 aa).

Methionine 1 is modified (N-acetylmethionine). At 1–36 (MNGTEGPNFYVPFSNKTGVVRSPFEYPQYYLAEPWQ) the chain is on the extracellular side. N-linked (GlcNAc...) asparagine glycans are attached at residues asparagine 2 and asparagine 15. The chain crosses the membrane as a helical span at residues 37 to 61 (FSMLAAYMFLLIVLGFPINFLTLYV). Residues 62-73 (TVQHKKLRTPLN) are Cytoplasmic-facing. Residues 74–96 (YILLNLAVADLFMVFGGFTTTLY) traverse the membrane as a helical segment. Residues 97 to 110 (TSLHGYFVFGPTGC) are Extracellular-facing. The cysteines at positions 110 and 187 are disulfide-linked. Residues 111–133 (NVEGFFATLGGEIALWSLVVLAI) traverse the membrane as a helical segment. Residues 134-136 (ERY) carry the 'Ionic lock' involved in activated form stabilization motif. The Cytoplasmic portion of the chain corresponds to 134–152 (ERYVVVCKPMSNFRFGENH). Residues 153 to 173 (AIMGVAFTWVMALACAAPPLA) traverse the membrane as a helical segment. At 174–202 (GWSRYIPEGMQCSCGIDYYTLKPEINNES) the chain is on the extracellular side. Glutamate 201 is a Zn(2+) binding site. A helical membrane pass occupies residues 203-224 (FVIYMFVVHFAIPMIVIFFCYG). Residues 225 to 252 (QLVFTVKEAAAQQQESATTQKAEKEVTR) are Cytoplasmic-facing. Residues 253-274 (MVIIMVIAFLICWVPYASVAFY) form a helical membrane-spanning segment. Residues 275–286 (IFTHQGSDFGPI) are Extracellular-facing. Zn(2+) is bound at residue glutamine 279. A helical membrane pass occupies residues 287–308 (FMTLPAFFAKSSSIYNPVIYIM). Lysine 296 is subject to N6-(retinylidene)lysine. At 309 to 348 (MNKQFRNCMITTLCCGKNPLGDDEASASASKTETSQVAPA) the chain is on the cytoplasmic side. 2 S-palmitoyl cysteine lipidation sites follow: cysteine 322 and cysteine 323. Positions 330–348 (DDEASASASKTETSQVAPA) are interaction with SAG. Residues serine 334 and serine 338 each carry the phosphoserine modification. Phosphothreonine is present on residues threonine 340 and threonine 342. A Phosphoserine modification is found at serine 343.

It belongs to the G-protein coupled receptor 1 family. Opsin subfamily. In terms of assembly, homodimer. May form a complex composed of RHO, GRK1 and RCVRN in a Ca(2+)-dependent manner; RCVRN prevents the interaction between GRK1 and RHO. Interacts with GRK1. Interacts (phosphorylated form) with SAG. Interacts with GNAT1. Interacts with GNAT3. SAG and G-proteins compete for a common binding site. Interacts with PRCD; the interaction promotes PRCD stability. Forms a complex with ASAP1 and ARF4. Forms a complex with ASAP1, RAB11A, Rabin8/RAB3IP, ARF4 and RAB11FIP3; the complex regulates Golgi-to-cilia rhodopsin/RHO transport in photoreceptors. In terms of processing, phosphorylated on some or all of the serine and threonine residues present in the C-terminal region. Contains one covalently linked retinal chromophore. Upon light absorption, the covalently bound 11-cis-retinal is converted to all-trans-retinal. After hydrolysis of the Schiff base and release of the covalently bound all-trans-retinal, active rhodopsin is regenerated by binding of a fresh molecule of 11-cis-retinal.

The protein localises to the membrane. It is found in the cell projection. The protein resides in the cilium. Its subcellular location is the photoreceptor outer segment. Functionally, photoreceptor required for image-forming vision at low light intensity. Required for photoreceptor cell viability after birth. Light-induced isomerization of 11-cis to all-trans retinal triggers a conformational change that activates signaling via G-proteins. Subsequent receptor phosphorylation mediates displacement of the bound G-protein alpha subunit by the arrestin SAG and terminates signaling. This chain is Rhodopsin (RHO), found in Canis lupus familiaris (Dog).